Here is a 412-residue protein sequence, read N- to C-terminus: Imidazolonepropionase (412 aa).

Fe(3+) contacts are provided by His76 and His78. His76 and His78 together coordinate Zn(2+). Arg85, Tyr148, and His181 together coordinate 4-imidazolone-5-propanoate. Residue Tyr148 participates in N-formimidoyl-L-glutamate binding. His242 provides a ligand contact to Fe(3+). Zn(2+) is bound at residue His242. Residue Glu245 coordinates 4-imidazolone-5-propanoate. Asp317 is a Fe(3+) binding site. Asp317 contacts Zn(2+). Positions 319 and 321 each coordinate N-formimidoyl-L-glutamate. Ser322 provides a ligand contact to 4-imidazolone-5-propanoate.

It belongs to the metallo-dependent hydrolases superfamily. HutI family. It depends on Zn(2+) as a cofactor. The cofactor is Fe(3+).

It is found in the cytoplasm. It catalyses the reaction 4-imidazolone-5-propanoate + H2O = N-formimidoyl-L-glutamate. The protein operates within amino-acid degradation; L-histidine degradation into L-glutamate; N-formimidoyl-L-glutamate from L-histidine: step 3/3. Its function is as follows. Catalyzes the hydrolytic cleavage of the carbon-nitrogen bond in imidazolone-5-propanoate to yield N-formimidoyl-L-glutamate. It is the third step in the universal histidine degradation pathway. This is Imidazolonepropionase from Staphylococcus aureus (strain MSSA476).